The primary structure comprises 618 residues: 1-deoxy-D-xylulose-5-phosphate synthase (618 aa).

Thiamine diphosphate-binding positions include H74 and G115 to S117. D146 is a Mg(2+) binding site. Residues G147 to A148, N175, Y286, and E366 contribute to the thiamine diphosphate site. Position 175 (N175) interacts with Mg(2+).

This sequence belongs to the transketolase family. DXPS subfamily. As to quaternary structure, homodimer. Mg(2+) is required as a cofactor. Requires thiamine diphosphate as cofactor.

The catalysed reaction is D-glyceraldehyde 3-phosphate + pyruvate + H(+) = 1-deoxy-D-xylulose 5-phosphate + CO2. Its pathway is metabolic intermediate biosynthesis; 1-deoxy-D-xylulose 5-phosphate biosynthesis; 1-deoxy-D-xylulose 5-phosphate from D-glyceraldehyde 3-phosphate and pyruvate: step 1/1. Functionally, catalyzes the acyloin condensation reaction between C atoms 2 and 3 of pyruvate and glyceraldehyde 3-phosphate to yield 1-deoxy-D-xylulose-5-phosphate (DXP). This chain is 1-deoxy-D-xylulose-5-phosphate synthase, found in Clostridium tetani (strain Massachusetts / E88).